Here is a 223-residue protein sequence, read N- to C-terminus: Urease accessory protein UreF (223 aa).

The protein belongs to the UreF family. UreD, UreF and UreG form a complex that acts as a GTP-hydrolysis-dependent molecular chaperone, activating the urease apoprotein by helping to assemble the nickel containing metallocenter of UreC. The UreE protein probably delivers the nickel.

Its subcellular location is the cytoplasm. Functionally, required for maturation of urease via the functional incorporation of the urease nickel metallocenter. The protein is Urease accessory protein UreF of Pseudomonas paraeruginosa (strain DSM 24068 / PA7) (Pseudomonas aeruginosa (strain PA7)).